The chain runs to 192 residues: Phosphoheptose isomerase (192 aa).

One can recognise an SIS domain in the interval valine 34–lysine 192. A substrate-binding site is contributed by asparagine 49–glycine 51. Zn(2+) contacts are provided by histidine 58 and glutamate 62. Residues glutamate 62, asparagine 91–aspartate 92, serine 117–serine 119, serine 122, and glutamine 169 contribute to the substrate site. Positions 169 and 177 each coordinate Zn(2+).

This sequence belongs to the SIS family. GmhA subfamily. As to quaternary structure, homotetramer. Zn(2+) is required as a cofactor.

It localises to the cytoplasm. The catalysed reaction is 2 D-sedoheptulose 7-phosphate = D-glycero-alpha-D-manno-heptose 7-phosphate + D-glycero-beta-D-manno-heptose 7-phosphate. The protein operates within carbohydrate biosynthesis; D-glycero-D-manno-heptose 7-phosphate biosynthesis; D-glycero-alpha-D-manno-heptose 7-phosphate and D-glycero-beta-D-manno-heptose 7-phosphate from sedoheptulose 7-phosphate: step 1/1. In terms of biological role, catalyzes the isomerization of sedoheptulose 7-phosphate in D-glycero-D-manno-heptose 7-phosphate. This Citrifermentans bemidjiense (strain ATCC BAA-1014 / DSM 16622 / JCM 12645 / Bem) (Geobacter bemidjiensis) protein is Phosphoheptose isomerase.